The chain runs to 146 residues: MELNSIKPAAGASKNRKRIGRGTGSGHGKTATKGHKGQKARSGGSVKAGFEGGQMPMHRRLPKRGFKPLSKKVYSVVNLSQLDAFEQGSCVDVEAMQKSGLVKDICDGIKILASGELTKSLTIKAHKFSAAARDKITSVGGTVEEI.

Positions 1 to 64 (MELNSIKPAA…MPMHRRLPKR (64 aa)) are disordered. The segment covering 30–39 (TATKGHKGQK) has biased composition (basic residues).

Belongs to the universal ribosomal protein uL15 family. As to quaternary structure, part of the 50S ribosomal subunit.

In terms of biological role, binds to the 23S rRNA. The polypeptide is Large ribosomal subunit protein uL15 (Geotalea daltonii (strain DSM 22248 / JCM 15807 / FRC-32) (Geobacter daltonii)).